The chain runs to 93 residues: Small ribosomal subunit protein uS19 (93 aa).

This sequence belongs to the universal ribosomal protein uS19 family.

In terms of biological role, protein S19 forms a complex with S13 that binds strongly to the 16S ribosomal RNA. This is Small ribosomal subunit protein uS19 from Frankia casuarinae (strain DSM 45818 / CECT 9043 / HFP020203 / CcI3).